Consider the following 597-residue polypeptide: Alpha-1,2-mannosyltransferase MNN2 (597 aa).

The Cytoplasmic segment spans residues methionine 1–lysine 12. The helical; Signal-anchor for type II membrane protein transmembrane segment at leucine 13 to asparagine 28 threads the bilayer. Over lysine 29–lysine 597 the chain is Extracellular. 3 N-linked (GlcNAc...) asparagine glycosylation sites follow: asparagine 34, asparagine 363, and asparagine 473.

The protein belongs to the MNN1/MNT family. As to quaternary structure, interacts with SVP26.

Its subcellular location is the golgi apparatus membrane. It participates in protein modification; protein glycosylation. Functionally, alpha-1,2-mannosyltransferase, responsible for addition of the first alpha-1,2-linked mannose to form the branches on the mannan backbone of oligosaccharides. The sequence is that of Alpha-1,2-mannosyltransferase MNN2 (MNN2) from Saccharomyces cerevisiae (strain ATCC 204508 / S288c) (Baker's yeast).